The sequence spans 355 residues: Probable NADPH-dependent quinone reductase tdiC (355 aa).

This sequence belongs to the zinc-containing alcohol dehydrogenase family. NADPH serves as cofactor.

It functions in the pathway secondary metabolite biosynthesis. Functionally, probable NADPH-dependent quinone reductase; part of the gene cluster that mediates the biosynthesis of terrequinone A, an antitumor agent. The first step in the biosynthetic pathway for terrequinone A is formation of indole pyruvic acid (IPA) from L-tryptophan by the aminotransferase tdiD. The nonribosomal peptide synthase tdiA then immediately converts unstable IPA to didemethylasterriquinone D (DDAQ D), via condensation of 2 IPA molecules. The symmetric connectivity of the 2 IPA molecules is thought to arise by head-to-tail dual Claisen condensations facilitated by the TE domain. TdiB then catalyzes reverse prenylation by transferring dimethylallyl diphosphate to carbon atom 2' of DDAQ D, to yield asterriquinone C-1. Finally, tdiC and tdiE enzymes robustly convert asterriquinone C-1 to terrequinone A via a transformation involving regular prenylation at carbon atom 5, which requires elimination of the hydroxy group on C-5. In Emericella nidulans (strain FGSC A4 / ATCC 38163 / CBS 112.46 / NRRL 194 / M139) (Aspergillus nidulans), this protein is Probable NADPH-dependent quinone reductase tdiC.